The primary structure comprises 735 residues: Ion-translocating oxidoreductase complex subunit C (735 aa).

2 consecutive 4Fe-4S ferredoxin-type domains span residues Met368–Tyr397 and Lys407–Phe436. Residues Cys377, Cys380, Cys383, Cys387, Cys416, Cys419, Cys422, and Cys426 each coordinate [4Fe-4S] cluster. The disordered stretch occupies residues Gln534–Ala715. Residues Gln666–Arg689 are compositionally biased toward low complexity.

The protein belongs to the 4Fe4S bacterial-type ferredoxin family. RnfC subfamily. As to quaternary structure, the complex is composed of six subunits: RsxA, RsxB, RsxC, RsxD, RsxE and RsxG. It depends on [4Fe-4S] cluster as a cofactor.

The protein localises to the cell inner membrane. Part of a membrane-bound complex that couples electron transfer with translocation of ions across the membrane. Required to maintain the reduced state of SoxR. The chain is Ion-translocating oxidoreductase complex subunit C from Salmonella paratyphi B (strain ATCC BAA-1250 / SPB7).